A 303-amino-acid chain; its full sequence is Pyridoxal 5'-phosphate synthase subunit PdxS (303 aa).

Asp-33 contacts D-ribose 5-phosphate. Lys-90 serves as the catalytic Schiff-base intermediate with D-ribose 5-phosphate. Gly-162 lines the D-ribose 5-phosphate pocket. Arg-174 is a D-glyceraldehyde 3-phosphate binding site. Residues Gly-223 and 244–245 (GS) each bind D-ribose 5-phosphate.

Belongs to the PdxS/SNZ family. As to quaternary structure, in the presence of PdxT, forms a dodecamer of heterodimers.

The enzyme catalyses aldehydo-D-ribose 5-phosphate + D-glyceraldehyde 3-phosphate + L-glutamine = pyridoxal 5'-phosphate + L-glutamate + phosphate + 3 H2O + H(+). The protein operates within cofactor biosynthesis; pyridoxal 5'-phosphate biosynthesis. Functionally, catalyzes the formation of pyridoxal 5'-phosphate from ribose 5-phosphate (RBP), glyceraldehyde 3-phosphate (G3P) and ammonia. The ammonia is provided by the PdxT subunit. Can also use ribulose 5-phosphate and dihydroxyacetone phosphate as substrates, resulting from enzyme-catalyzed isomerization of RBP and G3P, respectively. The protein is Pyridoxal 5'-phosphate synthase subunit PdxS of Streptomyces coelicolor (strain ATCC BAA-471 / A3(2) / M145).